The following is a 268-amino-acid chain: Indole-3-glycerol phosphate synthase (268 aa).

The protein belongs to the TrpC family.

The catalysed reaction is 1-(2-carboxyphenylamino)-1-deoxy-D-ribulose 5-phosphate + H(+) = (1S,2R)-1-C-(indol-3-yl)glycerol 3-phosphate + CO2 + H2O. Its pathway is amino-acid biosynthesis; L-tryptophan biosynthesis; L-tryptophan from chorismate: step 4/5. The chain is Indole-3-glycerol phosphate synthase from Acinetobacter baumannii (strain ACICU).